A 624-amino-acid polypeptide reads, in one-letter code: Serine/threonine-protein kinase ppk35 (624 aa).

The Protein kinase domain occupies 162 to 465; the sequence is FDLLVKLGQG…TIEIQKHPFF (304 aa). ATP is bound by residues 168-176 and Lys-191; that span reads LGQGGYGSV. Asp-285 acts as the Proton acceptor in catalysis. One can recognise an AGC-kinase C-terminal domain in the interval 466–548; sequence KRLHWNGLRK…KYRPNARKPL (83 aa). The span at 545 to 559 shows a compositional bias: basic residues; the sequence is RKPLVGRHREKRQLR. The segment at 545–617 is disordered; it reads RKPLVGRHRE…VHRLLERKGK (73 aa). Positions 560 to 574 are enriched in basic and acidic residues; the sequence is KEKPEKKNNSTKQKD. Residues 596–609 show a composition bias toward basic residues; the sequence is SKTKGHKTKSSRVH.

Belongs to the protein kinase superfamily. Ser/Thr protein kinase family.

It is found in the cytoplasm. Its subcellular location is the nucleus. The protein localises to the nucleolus. The enzyme catalyses L-seryl-[protein] + ATP = O-phospho-L-seryl-[protein] + ADP + H(+). It carries out the reaction L-threonyl-[protein] + ATP = O-phospho-L-threonyl-[protein] + ADP + H(+). In terms of biological role, has a role in meiosis. This Schizosaccharomyces pombe (strain 972 / ATCC 24843) (Fission yeast) protein is Serine/threonine-protein kinase ppk35 (ppk35).